The sequence spans 501 residues: MSGVQTAEAEAQAQNQANGNRTRSRSHLDNTMAIRLLPLPVRAQLCAHLDALDVWQQLATAVKLYPDQVEQISSQKQRGRSASNEFLNIWGGQYNHTVQTLFALFKKLKLHNAMRLIKDYVSEDLHKYIPRSVPTISELRAAPDSSAKVNNGPPFPSSSGVSNSNNNRTSTTATEEIPSLESLGNIHISTVQRAAESLLEIDYAELENATDGWSPDNRLGQGGFGDVYRGKWKQLDVAIKVMNYRSPNIDQKMVELQQSYNELKYLNSIRHDNILALYGYSIKGGKPCLVYQLMKGGSLEARLRAHKAQNPLPALTWQQRFSISLGTARGIYFLHTARGTPLIHGDIKPANILLDQCLQPKIGDFGLVREGPKSLDAVVEVNKVFGTKIYLPPEFRNFRQLSTGVDVYSFGIVLLEVFTGRQVTDRVPENETKKNLLDYVKQQWRQNRMELLEKHLAAPMGKELDMCMCAIEAGLHCTALDPQDRPSMNAVLKRFEPFVTD.

Residues 1 to 25 form a disordered region; it reads MSGVQTAEAEAQAQNQANGNRTRSR. Over residues 7 to 18 the composition is skewed to low complexity; that stretch reads AEAEAQAQNQAN. Positions 55–121 constitute a Death domain; the sequence is WQQLATAVKL…NAMRLIKDYV (67 aa). The tract at residues 144–176 is disordered; that stretch reads DSSAKVNNGPPFPSSSGVSNSNNNRTSTTATEE. Low complexity predominate over residues 149 to 167; sequence VNNGPPFPSSSGVSNSNNN. The region spanning 213–499 is the Protein kinase domain; it reads WSPDNRLGQG…AVLKRFEPFV (287 aa). Residues 219–227 and K240 contribute to the ATP site; that span reads LGQGGFGDV. D346 acts as the Proton acceptor in catalysis. ATP-binding positions include 348–351 and D364; that span reads KPAN.

Belongs to the protein kinase superfamily. TKL Ser/Thr protein kinase family. Pelle subfamily. As to quaternary structure, interacts (via Death domain) with tub (via Death domain). Interacts with Pellino (Pli).

The protein resides in the cell membrane. It localises to the cytoplasm. It catalyses the reaction L-seryl-[protein] + ATP = O-phospho-L-seryl-[protein] + ADP + H(+). The enzyme catalyses L-threonyl-[protein] + ATP = O-phospho-L-threonyl-[protein] + ADP + H(+). Its function is as follows. Plays an essential role in the Tl receptor signaling pathway that establishes embryonic dorsoventral polarity; the signal directs import of dl into ventral and ventrolateral nuclei, thereby establishing dorsoventral polarity. Tub recruits pll to the plasma membrane and protein-protein interaction activates pll. This is Serine/threonine-protein kinase pelle (pll) from Drosophila melanogaster (Fruit fly).